The primary structure comprises 131 residues: Small ribosomal subunit protein bS18 (131 aa).

Residues 1-10 (MSNGTDSKTA) are compositionally biased toward polar residues. Positions 1–60 (MSNGTDSKTASAPPARSGGGFGGGGSRGGDRGDRGDRGGDRGDRGGGLGGDDDKRGGGRG) are disordered. The segment covering 17-27 (SGGGFGGGGSR) has biased composition (gly residues). Positions 28-44 (GGDRGDRGDRGGDRGDR) are enriched in basic and acidic residues.

It belongs to the bacterial ribosomal protein bS18 family. Part of the 30S ribosomal subunit. Forms a tight heterodimer with protein bS6.

Binds as a heterodimer with protein bS6 to the central domain of the 16S rRNA, where it helps stabilize the platform of the 30S subunit. This chain is Small ribosomal subunit protein bS18, found in Myxococcus xanthus (strain DK1622).